The primary structure comprises 253 residues: MSLVCSVIFIHHAFNANILDKDYAFSDGEILMVDNAVRTHFEPYERHFKEIGFTENTIKKYLQCTNIQTVTVPVPAKFLRASNVPTGLLNEMIAYLNSEERNHHNFSELLLFSCLSIFAACKGFITLLTNGVLSVSGKVRNIVNMKPAHPWKLKDICDCLYISESLLKKKLKQEQTTFSQILLDARMQHAKNLIRVEGSVNKIAEQCGYASTSYFIYAFRKHFGNSPKRVSKEYRCQSHTGMNTGNTMNALAI.

An HTH araC/xylS-type domain is found at 137 to 233 (GKVRNIVNMK…GNSPKRVSKE (97 aa)). 2 DNA-binding regions (H-T-H motif) span residues 154–175 (KDIC…KQEQ) and 200–223 (VNKI…RKHF).

Functionally, induces the expression of gadE and mdtEF. Could also regulate the expression of other genes involved in acid resistance. The sequence is that of HTH-type transcriptional regulator YdeO (ydeO) from Escherichia coli (strain K12).